Consider the following 889-residue polypeptide: MLSSVCVWSFSGRQGTRKQHSQPAPTPQPPESSPPPLLPPPQQQCAQPGTAASPAGAPLSCGPGGRRAEPCSGLPAVAMGRHGGGGGDSGKIVINVGGVRHETYRSTLRTLPGTRLAGLTEPEAAARFDYDPGTDEFFFDRHPGVFAYVLNYYRTGKLHCPADVCGPLFEEELGFWGIDETDVEACCWMTYRQHRDAEEALDSFEAPDSSGNANANAGGAHDAGLDDEAGAGGGGLDGAGGELKRLCFQDAGGGAGGPAGGPGGAGGTWWRRWQPRVWALFEDPYSSRAARYVAFASLFFILISITTFCLETHEGFIHISNKTVTQASPIPGAPPENITNVEVETEPFLTYVEGVCVVWFTFEFLMRVTFCPDKVEFLKSSLNIIDCVAILPFYLEVGLSGLSSKAAKDVLGFLRVVRFVRILRIFKLTRHFVGLRVLGHTLRASTNEFLLLIIFLALGVLIFATMIYYAERIGADPDDILGSNHTYFKNIPIGFWWAVVTMTTLGYGDMYPKTWSGMLVGALCALAGVLTIAMPVPVIVNNFGMYYSLAMAKQKLPKKKNKHIPRPPQPGSPNYCKPDPPPPPPPHPHHGSGGISPPPPITPPSMGVTVAGAYPPGPHTHPGLLRGGAGGLGIMGLPPLPAPGEPCPLAQEEVIETNRAGNDLGVLEEGDPRPNGDPAAAALAHEDCPAIDQPAMSPEDKSPITPGSRGRYSRDRACFLVTDYAPSPDGSIRKATGAPPLPPHAGVSQAPPASCPTSTPTQQPGYPPSGRAPSPPQATPEAPAIFDVWLPPFHRSHQPPGKHQRGGRHPGVSPSPQQRACVGEPPSASHPQSLTLCISVPSSCHRLRPRETLGFPLSLPPRLATGNGGRECPRDPGLPFPSRHSSPAV.

The interval 1-80 (MLSSVCVWSF…CSGLPAVAMG (80 aa)) is important for normal N-type inactivation. At 1–291 (MLSSVCVWSF…EDPYSSRAAR (291 aa)) the chain is on the cytoplasmic side. Residues 10–66 (FSGRQGTRKQHSQPAPTPQPPESSPPPLLPPPQQQCAQPGTAASPAGAPLSCGPGGR) form a disordered region. The span at 24–42 (APTPQPPESSPPPLLPPPQ) shows a compositional bias: pro residues. The Zn(2+) site is built by His-159, Cys-165, Cys-186, and Cys-187. Positions 202–231 (DSFEAPDSSGNANANAGGAHDAGLDDEAGA) are disordered. The segment covering 211-222 (GNANANAGGAHD) has biased composition (low complexity). Residues 292–310 (YVAFASLFFILISITTFCL) form a helical membrane-spanning segment. Asn-321 carries N-linked (GlcNAc...) asparagine glycosylation. Residues 352–371 (VEGVCVVWFTFEFLMRVTFC) form a helical membrane-spanning segment. Topologically, residues 372-380 (PDKVEFLKS) are cytoplasmic. The helical transmembrane segment at 381–399 (SLNIIDCVAILPFYLEVGL) threads the bilayer. The helical; Voltage-sensor transmembrane segment at 413 to 435 (FLRVVRFVRILRIFKLTRHFVGL) threads the bilayer. Residues 436–448 (RVLGHTLRASTNE) are Cytoplasmic-facing. A helical transmembrane segment spans residues 449–470 (FLLLIIFLALGVLIFATMIYYA). Positions 504, 505, 506, and 507 each coordinate K(+). Positions 504-509 (TLGYGD) match the Selectivity filter motif. Residues 519–540 (LVGALCALAGVLTIAMPVPVIV) form a helical membrane-spanning segment. The Cytoplasmic portion of the chain corresponds to 541–889 (NNFGMYYSLA…FPSRHSSPAV (349 aa)). 3 disordered regions span residues 557-627 (PKKK…LLRG), 691-834 (IDQP…PQSL), and 852-889 (TLGF…SPAV). Position 626 is an omega-N-methylarginine (Arg-626). A phosphoserine mark is found at Ser-697 and Ser-702. The segment covering 748 to 764 (SQAPPASCPTSTPTQQP) has biased composition (low complexity). Phosphothreonine is present on Thr-759. A compositionally biased stretch (basic residues) spans 794–808 (HRSHQPPGKHQRGGR).

The protein belongs to the potassium channel family. C (Shaw) (TC 1.A.1.2) subfamily. Kv3.3/KCNC3 sub-subfamily. As to quaternary structure, homotetramer. Heterotetramer with KCNC1. Interacts (via C-terminus) with HAX1; this interaction modulates channel gating. Identified in a complex with ACTR3, a subunit of the Arp2/3 complex; this interaction is indirect and depends on the presence of HAX1. In terms of processing, N-glycosylated. In terms of tissue distribution, detected on Purkinje cells in the cerebellum molecular layer (at protein level).

Its subcellular location is the cell membrane. The protein localises to the presynaptic cell membrane. The protein resides in the perikaryon. It is found in the cell projection. It localises to the axon. Its subcellular location is the dendrite. The protein localises to the dendritic spine membrane. The protein resides in the cytoplasm. It is found in the cell cortex. It localises to the cytoskeleton. It catalyses the reaction K(+)(in) = K(+)(out). Its function is as follows. Voltage-gated potassium channel that plays an important role in the rapid repolarization of fast-firing brain neurons. The channel opens in response to the voltage difference across the membrane, forming a potassium-selective channel through which potassium ions pass in accordance with their electrochemical gradient. The channel displays rapid activation and inactivation kinetics. It plays a role in the regulation of the frequency, shape and duration of action potentials in Purkinje cells. Required for normal survival of cerebellar neurons, probably via its role in regulating the duration and frequency of action potentials that in turn regulate the activity of voltage-gated Ca(2+) channels and cellular Ca(2+) homeostasis. Required for normal motor function. Plays a role in the reorganization of the cortical actin cytoskeleton and the formation of actin veil structures in neuronal growth cones via its interaction with HAX1 and the Arp2/3 complex. In Rattus norvegicus (Rat), this protein is Voltage-gated potassium channel KCNC3.